The primary structure comprises 109 residues: Probable WRKY transcription factor 43 (109 aa).

The segment at residues 24-89 (SDADILDDGY…YEGIHNHPCE (66 aa)) is a DNA-binding region (WRKY).

Belongs to the WRKY group II-c family.

The protein resides in the nucleus. Transcription factor. Interacts specifically with the W box (5'-(T)TGAC[CT]-3'), a frequently occurring elicitor-responsive cis-acting element. The protein is Probable WRKY transcription factor 43 (WRKY43) of Arabidopsis thaliana (Mouse-ear cress).